We begin with the raw amino-acid sequence, 160 residues long: Nutritionally-regulated adipose and cardiac enriched protein homolog (160 aa).

The segment at 1–69 is disordered; sequence MRTAAGAVSP…AKPQRTSRRV (69 aa). Basic and acidic residues-rich tracts occupy residues 12 to 25 and 33 to 42; these read SRPE…KNEE and CRAEREDNRK. Residues 101–121 form a helical membrane-spanning segment; the sequence is GGSLLLQLCVCVLLVLALGLY.

Its subcellular location is the cell membrane. This Homo sapiens (Human) protein is Nutritionally-regulated adipose and cardiac enriched protein homolog (NRAC).